The primary structure comprises 1058 residues: Vacuolar protein sorting-associated protein 54 (1058 aa).

A coiled-coil region spans residues 369–389 (SKKIVEVHERYEQKKKLLAKL).

The protein belongs to the VPS54 family. Component of the Golgi-associated retrograde protein (GARP) complex, also called VFT (VPS fifty-three) complex, composed of vps-51, vps-52, vps-53 and vps-54. Within the complex interacts with vps-52 and vps-53.

The protein resides in the golgi apparatus. The protein localises to the trans-Golgi network. In terms of biological role, acts as a component of the GARP complex that is involved in retrograde transport from early and late endosomes to the trans-Golgi network (TGN). The GARP complex facilitates tethering as well as SNARE complex assembly at the Golgi. The sequence is that of Vacuolar protein sorting-associated protein 54 from Caenorhabditis elegans.